A 544-amino-acid polypeptide reads, in one-letter code: Spore germination protein KA (544 aa).

The disordered stretch occupies residues Met-1–Ile-36. Basic and acidic residues predominate over residues Asn-9–Pro-33. 5 helical membrane-spanning segments follow: residues Phe-279–Phe-299, Val-321–His-341, Ala-392–Ser-412, Val-416–Ile-436, and Phe-443–Met-463. Residues Lys-504–Pro-523 show a composition bias toward basic and acidic residues. The segment at Lys-504–Thr-544 is disordered.

Belongs to the GerABKA family.

It localises to the cell membrane. Functionally, involved in the germination response to the combination of glucose, fructose, L-asparagine, and KCl. The polypeptide is Spore germination protein KA (gerKA) (Bacillus subtilis (strain 168)).